Reading from the N-terminus, the 134-residue chain is Small ribosomal subunit protein uS8c (134 aa).

This sequence belongs to the universal ribosomal protein uS8 family. In terms of assembly, part of the 30S ribosomal subunit.

The protein resides in the plastid. Functionally, one of the primary rRNA binding proteins, it binds directly to 16S rRNA central domain where it helps coordinate assembly of the platform of the 30S subunit. In Epifagus virginiana (Beechdrops), this protein is Small ribosomal subunit protein uS8c (rps8).